Here is a 112-residue protein sequence, read N- to C-terminus: MPDGWRKMGVLVFYDLPVVSPEQRLAAVRFHKFLLADGFERMHYSIYARYCGSMERAATYERRVEQALPAVGHVNLLKLTDRQMVGMRKWIRGNYRAPENAEFVPPAQYQLF.

Position 15 (D15) interacts with Mg(2+).

This sequence belongs to the CRISPR-associated endoribonuclease Cas2 protein family. Homodimer, forms a heterotetramer with a Cas1 homodimer. The cofactor is Mg(2+).

Functionally, CRISPR (clustered regularly interspaced short palindromic repeat), is an adaptive immune system that provides protection against mobile genetic elements (viruses, transposable elements and conjugative plasmids). CRISPR clusters contain sequences complementary to antecedent mobile elements and target invading nucleic acids. CRISPR clusters are transcribed and processed into CRISPR RNA (crRNA). Functions as a ssRNA-specific endoribonuclease. Involved in the integration of spacer DNA into the CRISPR cassette. This Rhodospirillum rubrum (strain ATCC 11170 / ATH 1.1.1 / DSM 467 / LMG 4362 / NCIMB 8255 / S1) protein is CRISPR-associated endoribonuclease Cas2 2.